We begin with the raw amino-acid sequence, 490 residues long: Prostaglandin E2 receptor EP4 subtype (490 aa).

Topologically, residues 1-19 are extracellular; that stretch reads MSTPGVNASASLSPDRLNS. N-linked (GlcNAc...) asparagine glycosylation occurs at N7. A helical transmembrane segment spans residues 20–43; that stretch reads PVTIPAVMFIFGVVGNLVAIVVLC. Residues 44–55 lie on the Cytoplasmic side of the membrane; the sequence is KSRKEQKETTFY. Residues 56 to 79 form a helical membrane-spanning segment; sequence TLVCGLAVTDLLGTLLVSPVTIAT. At 80–96 the chain is on the extracellular side; it reads YMKGQWPGGQPLCEYST. C92 and C170 are joined by a disulfide. Residues 97-115 form a helical membrane-spanning segment; sequence FILLFFSLSGLSIICAMSV. Topologically, residues 116-135 are cytoplasmic; that stretch reads ERYLAINHAYFYSHYVDKRL. Residues 136–160 form a helical membrane-spanning segment; it reads AGLTLFAVYASNVLFCALPNMGLGS. Residues 161–184 are Extracellular-facing; it reads SRLQYPDTWCFIDWTTNVTAHAAY. The chain crosses the membrane as a helical span at residues 185–211; that stretch reads SYMYAGFSSFLILATVLCNVLVCGALL. Topologically, residues 212-269 are cytoplasmic; sequence RMHRQFMRRTSLGTEQHHAAAAAVTSVASRGHPAASPALPRLSDFRRRRSFRRIAGAE. The helical transmembrane segment at 270 to 297 threads the bilayer; sequence IQMVILLIATSLVVLICSIPLVVRVFVN. Residues 298-314 lie on the Extracellular side of the membrane; it reads QLYQPSLEREVSKNPDL. Residues 315 to 334 traverse the membrane as a helical segment; that stretch reads QAIRIASVNPILDPWIYILL. The Cytoplasmic portion of the chain corresponds to 335–490; that stretch reads RKTVLSKAIE…ETLNLSEKCI (156 aa). Positions 359 to 378 are disordered; it reads ERSGQHCSDSQRTSSAMSGH. The span at 363 to 378 shows a compositional bias: polar residues; that stretch reads QHCSDSQRTSSAMSGH. A phosphoserine mark is found at S376, S379, S381, and S384. A compositionally biased stretch (polar residues) spans 439 to 451; the sequence is SETSDSSQGQDSE. A disordered region spans residues 439 to 477; the sequence is SETSDSSQGQDSESVLLVDEAGGSGRAGPAPKGSSLQVT.

This sequence belongs to the G-protein coupled receptor 1 family. In terms of assembly, interacts with FEM1A. In terms of processing, phosphorylation mediates agonist-mediated desensitization by promoting cytoplasmic retention.

It is found in the cell membrane. Receptor for prostaglandin E2 (PGE2). The activity of this receptor is mediated by G(s) proteins that stimulate adenylate cyclase. Has a relaxing effect on smooth muscle. May play an important role in regulating renal hemodynamics, intestinal epithelial transport, adrenal aldosterone secretion, and uterine function. The protein is Prostaglandin E2 receptor EP4 subtype (PTGER4) of Pan troglodytes (Chimpanzee).